The primary structure comprises 389 residues: Geranylgeranyl pyrophosphate synthase A (389 aa).

Lysine 99, arginine 102, and histidine 131 together coordinate isopentenyl diphosphate. Residues aspartate 138 and aspartate 142 each contribute to the Mg(2+) site. Position 147 (arginine 147) interacts with dimethylallyl diphosphate. Arginine 148 provides a ligand contact to isopentenyl diphosphate.

Belongs to the FPP/GGPP synthase family. Mg(2+) serves as cofactor.

The protein localises to the cytoplasm. It catalyses the reaction isopentenyl diphosphate + (2E)-geranyl diphosphate = (2E,6E)-farnesyl diphosphate + diphosphate. The enzyme catalyses isopentenyl diphosphate + (2E,6E)-farnesyl diphosphate = (2E,6E,10E)-geranylgeranyl diphosphate + diphosphate. The protein operates within isoprenoid biosynthesis; farnesyl diphosphate biosynthesis; farnesyl diphosphate from geranyl diphosphate and isopentenyl diphosphate: step 1/1. It participates in isoprenoid biosynthesis; geranylgeranyl diphosphate biosynthesis; geranylgeranyl diphosphate from farnesyl diphosphate and isopentenyl diphosphate: step 1/1. Catalyzes the trans-addition of the 2 molecules of isopentenyl diphosphate (IPP) onto geranyl diphosphate (GDP) to form geranylgeranyl pyrophosphate (GGDP). Does not catalyze the conversion of dimethylallyl diphosphate (DMAPP). The polypeptide is Geranylgeranyl pyrophosphate synthase A (GGS-A) (Phomopsis amygdali (Fusicoccum amygdali)).